Reading from the N-terminus, the 764-residue chain is Protein translocase subunit SecA 2 (764 aa).

ATP is bound by residues Q83, 101–105, and D490; that span reads GEGKT.

This sequence belongs to the SecA family. Monomer and homodimer. Part of the essential Sec protein translocation apparatus which comprises SecA, SecYEG and auxiliary proteins SecDF. Other proteins may also be involved.

It is found in the cell membrane. The protein resides in the cytoplasm. The enzyme catalyses ATP + H2O + cellular proteinSide 1 = ADP + phosphate + cellular proteinSide 2.. Part of the Sec protein translocase complex. Interacts with the SecYEG preprotein conducting channel. Has a central role in coupling the hydrolysis of ATP to the transfer of proteins into and across the cell membrane, serving as an ATP-driven molecular motor driving the stepwise translocation of polypeptide chains across the membrane. This is Protein translocase subunit SecA 2 from Corynebacterium diphtheriae (strain ATCC 700971 / NCTC 13129 / Biotype gravis).